The primary structure comprises 171 residues: CDP-archaeol synthase (171 aa).

Helical transmembrane passes span 7 to 27 (IFWA…PVLV), 54 to 74 (GFIG…FITP), 84 to 104 (VKLA…GSFI), 115 to 135 (PAIG…AYPV), and 141 to 161 (GQII…NYFA).

Belongs to the CDP-archaeol synthase family. It depends on Mg(2+) as a cofactor.

The protein localises to the cell membrane. The catalysed reaction is 2,3-bis-O-(geranylgeranyl)-sn-glycerol 1-phosphate + CTP + H(+) = CDP-2,3-bis-O-(geranylgeranyl)-sn-glycerol + diphosphate. The protein operates within membrane lipid metabolism; glycerophospholipid metabolism. In terms of biological role, catalyzes the formation of CDP-2,3-bis-(O-geranylgeranyl)-sn-glycerol (CDP-archaeol) from 2,3-bis-(O-geranylgeranyl)-sn-glycerol 1-phosphate (DGGGP) and CTP. This reaction is the third ether-bond-formation step in the biosynthesis of archaeal membrane lipids. This chain is CDP-archaeol synthase, found in Thermococcus kodakarensis (strain ATCC BAA-918 / JCM 12380 / KOD1) (Pyrococcus kodakaraensis (strain KOD1)).